A 192-amino-acid chain; its full sequence is Protein GrpE (192 aa).

It belongs to the GrpE family. In terms of assembly, homodimer.

It localises to the cytoplasm. Its function is as follows. Participates actively in the response to hyperosmotic and heat shock by preventing the aggregation of stress-denatured proteins, in association with DnaK and GrpE. It is the nucleotide exchange factor for DnaK and may function as a thermosensor. Unfolded proteins bind initially to DnaJ; upon interaction with the DnaJ-bound protein, DnaK hydrolyzes its bound ATP, resulting in the formation of a stable complex. GrpE releases ADP from DnaK; ATP binding to DnaK triggers the release of the substrate protein, thus completing the reaction cycle. Several rounds of ATP-dependent interactions between DnaJ, DnaK and GrpE are required for fully efficient folding. This is Protein GrpE from Neisseria gonorrhoeae (strain ATCC 700825 / FA 1090).